The chain runs to 334 residues: Protein OPG181 (334 aa).

This sequence belongs to the orthopoxvirus OPG181 family.

The protein is Protein OPG181 (OPG181) of Bos taurus (Bovine).